A 154-amino-acid chain; its full sequence is MAPARAGCCALLLLLLGLWVAEIPVSAKPKDMTSSQWLKTQHMQPSPQACNSAMNNINKYTEQCKDLNTFLHELFSSVATTCQTPNIACKNSRKNCHQSHGPMSLTMCELTSGKYPNCRYKEKHLNAPYIAACDPPQQGDPGYPLVPVHLDKVV.

The signal sequence occupies residues 1 to 27 (MAPARAGCCALLLLLLGLWVAEIPVSA). The active-site Proton acceptor is H42. Disulfide bonds link C64–C118, C82–C133, and C89–C96. Residues 65–69 (KDLNT) and K90 contribute to the substrate site. The active-site Proton donor is H149.

It belongs to the pancreatic ribonuclease family.

The protein localises to the secreted. Has a low ribonuclease activity. In Pongo pygmaeus (Bornean orangutan), this protein is Ribonuclease 8 (RNASE8).